The primary structure comprises 141 residues: Large ribosomal subunit protein uL13 (141 aa).

The protein belongs to the universal ribosomal protein uL13 family. As to quaternary structure, part of the 50S ribosomal subunit.

Functionally, this protein is one of the early assembly proteins of the 50S ribosomal subunit, although it is not seen to bind rRNA by itself. It is important during the early stages of 50S assembly. The sequence is that of Large ribosomal subunit protein uL13 from Deinococcus deserti (strain DSM 17065 / CIP 109153 / LMG 22923 / VCD115).